Consider the following 449-residue polypeptide: MRRKNGLVFLAILAAMILAFTIVLPTDKGALLGKGILFGLDLKGGLHMVYQADLSNVDESNIDGVMDGVVEVISNRINPLGVTEASIQRQGDDRIVVELPGLDITDEQKARIGRTALLEFGELAADGEDYKWENSLGKWKPATATIDGVEYTLTSAYFKDSTYVNRDQYGNILLVFEWDDIGAQLSKEITTRLLNQQLGIFEGDEALSGDNGIPIAPVINNVIETSGVIEGLSYNEAEMLSNQLNAGRLPVPLEPIYEQTVSPTLGQNFVDLAVKAGLVGIILVMIFMIAFYRLPGLLASIALVFYGVIVLALFKLVPVTLTLAGIGGFIVSAGMAVDANILIFARLKEELLTGKTLGAAVEAGFSRAWSAIWDSNVTTFIACGILFWVGGTIAAGAPVKGFAVTLFLGVAVSMFTAIFVTRTLLRLFVGTKTGKKLALFTTQTRGKNE.

6 helical membrane-spanning segments follow: residues 6–26 (GLVFLAILAAMILAFTIVLPT), 272–292 (LAVKAGLVGIILVMIFMIAFY), 294–314 (LPGLLASIALVFYGVIVLALF), 317–337 (VPVTLTLAGIGGFIVSAGMAV), 379–399 (TFIACGILFWVGGTIAAGAPV), and 401–421 (GFAVTLFLGVAVSMFTAIFVT).

Belongs to the SecD/SecF family. SecD subfamily. Forms a complex with SecF. Part of the essential Sec protein translocation apparatus which comprises SecA, SecYEG and auxiliary proteins SecDF. Other proteins may also be involved.

The protein localises to the cell membrane. Part of the Sec protein translocase complex. Interacts with the SecYEG preprotein conducting channel. SecDF uses the proton motive force (PMF) to complete protein translocation after the ATP-dependent function of SecA. This chain is Protein translocase subunit SecD, found in Dehalococcoides mccartyi (strain VS).